The chain runs to 1085 residues: Toxin VasX (1085 aa).

The segment at 1 to 20 (MSNPNQAAKTGQTNDAQNPA) is disordered. 4 helical membrane passes run 753–773 (ALGE…AISA), 813–833 (IALV…ESWG), 860–880 (IIFY…PSIA), and 884–904 (AGWM…GVIL).

It is found in the secreted. It localises to the host membrane. Its function is as follows. Toxin secreted by the type VI (T6SS) secretion system that acts on prokaryotic target cells. Acts in conjunction with VasW, an accessory protein to VasX, to compromise the inner membrane of prokaryotic target cells. The protein is Toxin VasX of Vibrio cholerae serotype O1 (strain ATCC 39315 / El Tor Inaba N16961).